The primary structure comprises 207 residues: MARYLGPKAKLARREGTDLFLKSARRALSDKCRLDNKPGQDGRTSGSRTSDYGNQLREKQKVKRIYGVLERQFRRYFAEAERRKGNTGETLLQLLESRLDNVVYRMGFGSTRAEARQLVSHCAILLNGNPVNIPSIQVKPGDVVAIREKAKKQARITESLNLVGQMAAVTWVSVDVAKLEGTFKQVPDREDISGEINESLIVELYSR.

Positions 31 to 40 are enriched in basic and acidic residues; it reads KCRLDNKPGQ. The interval 31–56 is disordered; the sequence is KCRLDNKPGQDGRTSGSRTSDYGNQL. Over residues 42 to 53 the composition is skewed to polar residues; that stretch reads GRTSGSRTSDYG. The 62-residue stretch at 97–158 folds into the S4 RNA-binding domain; it reads SRLDNVVYRM…KAKKQARITE (62 aa).

This sequence belongs to the universal ribosomal protein uS4 family. In terms of assembly, part of the 30S ribosomal subunit. Contacts protein S5. The interaction surface between S4 and S5 is involved in control of translational fidelity.

In terms of biological role, one of the primary rRNA binding proteins, it binds directly to 16S rRNA where it nucleates assembly of the body of the 30S subunit. Its function is as follows. With S5 and S12 plays an important role in translational accuracy. The chain is Small ribosomal subunit protein uS4 from Polynucleobacter necessarius subsp. necessarius (strain STIR1).